The sequence spans 340 residues: Glucokinase (340 aa).

Residue 17–22 (GDIGGT) participates in ATP binding.

The protein belongs to the bacterial glucokinase family.

Its subcellular location is the cytoplasm. It catalyses the reaction D-glucose + ATP = D-glucose 6-phosphate + ADP + H(+). The chain is Glucokinase from Allorhizobium ampelinum (strain ATCC BAA-846 / DSM 112012 / S4) (Agrobacterium vitis (strain S4)).